Here is a 467-residue protein sequence, read N- to C-terminus: MPPKEDWEKYKAPLEDDDKKPDDDKIVPLTEGDIQVLKSYGAAPYAAKLKQTENDLKDIEARIKEKAGVKESDTGLAPSHLWDIMGDRQRLGEEHPLQVARCTKIIKGNGESDETTTDNNNSGNSNSNSNQQSTDADEDDEDAKYVINLKQIAKFVVGLGERVSPTDIEEGMRVGVDRSKYNIELPLPPRIDPSVTMMTVEEKPDVTYSDVGGCKDQIEKLREVVELPLLSPERFATLGIDPPKGILLYGPPGTGKTLCARAVANRTDATFIRVIGSELVQKYVGEGARMVRELFEMARTKKACIIFFDEIDAVGGARFDDGAGGDNEVQRTMLELITQLDGFDPRGNIKVMFATNRPNTLDPALLRPGRIDRKVEFSLPDLEGRANIFRIHSKSMSVERGIRWELISRLCPNSTGAELRSVCTEAGMFAIRARRKVATEKDFLKAVDKVISGYKKFSSTSRYMQYN.

Disordered regions lie at residues 1–26 (MPPK…DDKI) and 108–140 (GNGE…DEDD). Over residues 117–134 (TDNNNSGNSNSNSNQQST) the composition is skewed to low complexity. Phosphoserine occurs at positions 164 and 231. 250-257 (GPPGTGKT) contributes to the ATP binding site.

This sequence belongs to the AAA ATPase family. In terms of assembly, interacts with UBR1 and CIC1. The N-terminus is blocked.

It is found in the cytoplasm. Its subcellular location is the nucleus. In terms of biological role, the 26S proteasome is involved in the ATP-dependent degradation of ubiquitinated proteins. The regulatory (or ATPase) complex confers ATP dependency and substrate specificity to the 26S complex. The chain is 26S proteasome regulatory subunit 7 homolog (RPT1) from Saccharomyces cerevisiae (strain ATCC 204508 / S288c) (Baker's yeast).